The chain runs to 163 residues: Putative H/ACA ribonucleoprotein complex subunit 2-like protein (163 aa).

Belongs to the eukaryotic ribosomal protein eL8 family. Component of the small nucleolar ribonucleoprotein particle containing H/ACA-type snoRNAs (H/ACA snoRNPs).

It localises to the nucleus. The protein resides in the nucleolus. Required for ribosome biogenesis. Part of a complex which catalyzes pseudouridylation of rRNA. This involves the isomerization of uridine such that the ribose is subsequently attached to C5, instead of the normal N1. Pseudouridine ('psi') residues may serve to stabilize the conformation of rRNAs. The protein is Putative H/ACA ribonucleoprotein complex subunit 2-like protein of Caenorhabditis briggsae.